The following is a 142-amino-acid chain: Large ribosomal subunit protein uL11 (142 aa).

The protein belongs to the universal ribosomal protein uL11 family. As to quaternary structure, part of the ribosomal stalk of the 50S ribosomal subunit. Interacts with L10 and the large rRNA to form the base of the stalk. L10 forms an elongated spine to which L12 dimers bind in a sequential fashion forming a multimeric L10(L12)X complex. One or more lysine residues are methylated.

Forms part of the ribosomal stalk which helps the ribosome interact with GTP-bound translation factors. The protein is Large ribosomal subunit protein uL11 of Shewanella pealeana (strain ATCC 700345 / ANG-SQ1).